Here is a 635-residue protein sequence, read N- to C-terminus: Probable potassium transport system protein Kup (635 aa).

12 helical membrane-spanning segments follow: residues 20-40 (MALV…SPLY), 62-82 (VLSL…VTII), 111-131 (AYVV…DGVI), 149-169 (PSLH…VFMV), 180-200 (VFGP…IWNI), 223-243 (GWHG…GEAL), 259-279 (WYFF…ALVL), 292-312 (AVPS…AVIA), 349-369 (IYVP…VLIF), 377-397 (VAYG…LALV), 408-428 (WVLP…IANG), and 429-449 (AKLL…FTLM).

This sequence belongs to the HAK/KUP transporter (TC 2.A.72) family.

The protein localises to the cell inner membrane. It catalyses the reaction K(+)(in) + H(+)(in) = K(+)(out) + H(+)(out). Transport of potassium into the cell. Likely operates as a K(+):H(+) symporter. The sequence is that of Probable potassium transport system protein Kup from Xanthomonas campestris pv. campestris (strain 8004).